The primary structure comprises 334 residues: Ethanol acetyltransferase 1 (334 aa).

A mitochondrion-targeting transit peptide spans 1-16 (MFASNVVVLNKRSIRF). Residues Ser124, Asp148, and His296 each act as charge relay system in the active site.

It belongs to the AB hydrolase superfamily.

It localises to the mitochondrion. It catalyses the reaction ethanol + acetyl-CoA = ethyl acetate + CoA. The catalysed reaction is acetyl-CoA + H2O = acetate + CoA + H(+). It carries out the reaction ethyl acetate + H2O = ethanol + acetate + H(+). Functionally, alcohol acetyltransferase that catalyzes the synthesis of ethyl acetate from ethanol and acetyl-CoA. Can also function as a thioesterase by hydrolyzing acetyl-CoA in the absence of ethanol, as well as esterase hydrolyzing ethyl acetate. The polypeptide is Ethanol acetyltransferase 1 (EAT1) (Hanseniaspora uvarum (Yeast)).